The following is a 124-amino-acid chain: Small ribosomal subunit protein eS8 (124 aa).

The segment covering methionine 1 to lysine 22 has biased composition (basic residues). 2 disordered regions span residues methionine 1–arginine 40 and alanine 102–glutamate 124. Positions serine 23–threonine 32 are enriched in basic and acidic residues. Positions arginine 106–glutamate 124 are enriched in polar residues.

This sequence belongs to the eukaryotic ribosomal protein eS8 family. Part of the 30S ribosomal subunit.

This chain is Small ribosomal subunit protein eS8, found in Halobacterium salinarum (strain ATCC 29341 / DSM 671 / R1).